A 396-amino-acid chain; its full sequence is E3 ubiquitin-protein ligase NHLRC1 (396 aa).

The segment at 23 to 69 (CKVCFERFGHRQQRRPRNLPCGHVVCLACVAALAHPRTLALECPFCR) adopts an RING-type zinc-finger fold. NHL repeat units lie at residues 110-154 (ALTC…FDSG), 158-201 (AHQF…FDFF), 202-242 (GQIK…LEAD), 245-298 (EGVL…FNSS), 299-347 (MQLI…LGKP), and 348-391 (EEFP…FKVM).

As to quaternary structure, interacts with AGL. Interacts (via the NHL repeats) with EPM2A/laforin. Forms a complex with EPM2A/laforin and HSP70.

Its subcellular location is the endoplasmic reticulum. The protein resides in the nucleus. The catalysed reaction is S-ubiquitinyl-[E2 ubiquitin-conjugating enzyme]-L-cysteine + [acceptor protein]-L-lysine = [E2 ubiquitin-conjugating enzyme]-L-cysteine + N(6)-ubiquitinyl-[acceptor protein]-L-lysine.. The protein operates within protein modification; protein ubiquitination. In terms of biological role, E3 ubiquitin-protein ligase. Together with the phosphatase EPM2A/laforin, appears to be involved in the clearance of toxic polyglucosan and protein aggregates via multiple pathways. In complex with EPM2A/laforin and HSP70, suppresses the cellular toxicity of misfolded proteins by promoting their degradation through the ubiquitin-proteasome system (UPS). Ubiquitinates the glycogen-targeting protein phosphatase subunits PPP1R3C/PTG and PPP1R3D in a laforin-dependent manner and targets them for proteasome-dependent degradation, thus decreasing glycogen accumulation. Polyubiquitinates EPM2A/laforin and ubiquitinates AGL and targets them for proteasome-dependent degradation. Also promotes proteasome-independent protein degradation through the macroautophagy pathway. The protein is E3 ubiquitin-protein ligase NHLRC1 (Nhlrc1) of Rattus norvegicus (Rat).